We begin with the raw amino-acid sequence, 106 residues long: Translation initiation factor 1A 2 (106 aa).

Residues 1 to 24 (MRKRREGTANNSPTPEVTRVRTPR) are disordered. An S1-like domain is found at 18–92 (TRVRTPRKEN…SKADVIWKYT (75 aa)).

It belongs to the eIF-1A family.

In terms of biological role, seems to be required for maximal rate of protein biosynthesis. Enhances ribosome dissociation into subunits and stabilizes the binding of the initiator Met-tRNA(I) to 40 S ribosomal subunits. In Methanosarcina mazei (strain ATCC BAA-159 / DSM 3647 / Goe1 / Go1 / JCM 11833 / OCM 88) (Methanosarcina frisia), this protein is Translation initiation factor 1A 2 (eIF1A2).